Here is an 839-residue protein sequence, read N- to C-terminus: Probable beta-glucosidase I (839 aa).

A glycan (N-linked (GlcNAc...) asparagine) is linked at N197. D225 is a catalytic residue. Positions 396 to 556 (DGKTGFKFRV…TQEELISKAV (161 aa)) constitute a PA14 domain. N494 carries an N-linked (GlcNAc...) asparagine glycan.

This sequence belongs to the glycosyl hydrolase 3 family.

The protein resides in the secreted. The catalysed reaction is Hydrolysis of terminal, non-reducing beta-D-glucosyl residues with release of beta-D-glucose.. It participates in glycan metabolism; cellulose degradation. Functionally, beta-glucosidases are one of a number of cellulolytic enzymes, and catalyze the last step releasing glucose from the inhibitory cellobiose. The polypeptide is Probable beta-glucosidase I (bglI) (Emericella nidulans (strain FGSC A4 / ATCC 38163 / CBS 112.46 / NRRL 194 / M139) (Aspergillus nidulans)).